Reading from the N-terminus, the 503-residue chain is Maturase K (503 aa).

It belongs to the intron maturase 2 family. MatK subfamily.

Its subcellular location is the plastid. It is found in the chloroplast. Functionally, usually encoded in the trnK tRNA gene intron. Probably assists in splicing its own and other chloroplast group II introns. This Lathyrus vestitus (Pacific pea) protein is Maturase K.